The chain runs to 158 residues: Transcriptional repressor NrdR (158 aa).

A zinc finger spans residues C3–C34. Residues I49–T139 enclose the ATP-cone domain.

This sequence belongs to the NrdR family. Zn(2+) is required as a cofactor.

In terms of biological role, negatively regulates transcription of bacterial ribonucleotide reductase nrd genes and operons by binding to NrdR-boxes. This Thermoanaerobacter pseudethanolicus (strain ATCC 33223 / 39E) (Clostridium thermohydrosulfuricum) protein is Transcriptional repressor NrdR.